The following is a 242-amino-acid chain: Tryptophan synthase alpha chain (242 aa).

Residues E31 and D42 each act as proton acceptor in the active site.

The protein belongs to the TrpA family. In terms of assembly, tetramer of two alpha and two beta chains.

It catalyses the reaction (1S,2R)-1-C-(indol-3-yl)glycerol 3-phosphate + L-serine = D-glyceraldehyde 3-phosphate + L-tryptophan + H2O. The protein operates within amino-acid biosynthesis; L-tryptophan biosynthesis; L-tryptophan from chorismate: step 5/5. Its function is as follows. The alpha subunit is responsible for the aldol cleavage of indoleglycerol phosphate to indole and glyceraldehyde 3-phosphate. The chain is Tryptophan synthase alpha chain from Staphylococcus aureus (strain MRSA252).